Consider the following 317-residue polypeptide: UV DNA damage endonuclease (317 aa).

The protein belongs to the uve1/UvsE family.

In terms of biological role, component in a DNA repair pathway. Removal of UV LIGHT damaged nucleotides. Recognizes pyrimidine dimers and cleave a phosphodiester bond immediately 5' to the lesion. The protein is UV DNA damage endonuclease of Bacillus mycoides (strain KBAB4) (Bacillus weihenstephanensis).